The primary structure comprises 128 residues: Cystatin-2 (128 aa).

Positions 1 to 19 are cleaved as a signal peptide; the sequence is MSSFKVAVLLIAVYGASQG. Residues 29–116 form the Cystatin domain; the sequence is QDPTEARFLE…CVAVIYHVPW (88 aa). Intrachain disulfides connect cysteine 84-cysteine 96 and cysteine 107-cysteine 127.

The protein belongs to the cystatin family. As to expression, widely expressed. Detected in salivary glands (at protein level), gut (at protein level), ovaries, and Malpighian tubules.

The protein resides in the secreted. In terms of biological role, inhibitor of cysteine proteinases with broad specificity for mammalian cathepsins, including endopeptidases (cathepsins L and S) and exopeptidases (cathepsins B, C and H). Also inhibits endogenous cathepsin B-like and cathepsin C-like proteinases. Does not inhibit human legumain. May mimic specific host-derived cystatin(s) to interfere with its/their function in controlling cathepsin-mediated proteolysis. Affects the function of antigen-presenting mouse dendritic cells by reducing the production of the pro-inflammatory cytokines TNF and interleukin-12, and proliferation of antigen-specific CD4+ T-cells, suggesting it may suppress the host adaptive immune response. It is noteworthy that immunization of mice with this protein reduces O.moubata survival in infestation experiments. This chain is Cystatin-2, found in Ornithodoros moubata (Soft tick).